The sequence spans 89 residues: Dynein light chain 1, cytoplasmic (89 aa).

The protein belongs to the dynein light chain family. As to quaternary structure, interacts with mett-10; the interaction is direct, and is required for the nuclear localization of mett-10. Component of a dynein-regulating complex composed of at least bicd-1, dlc-1 and egal-1. Interacts with egal-1 and unc-83. Interacts with fbf-2. As to expression, broadly expressed in tissues including the intestine, body wall muscles, germs cells, oocytes, the rectal valve and cells in the head.

The protein resides in the cytoplasm. It localises to the cytoskeleton. It is found in the nucleus envelope. The protein localises to the cytoplasmic granule. Acts as a non-catalytic accessory component of a dynein complex. Part of a complex with bicd-1 and egal-1, which is recruited to the nuclear envelope by unc-83, where in turn, it recruits dynein to the nuclear surface and regulates nuclear migrations in hypodermal precursor cells. Probably within a dynein motor complex, plays a role in the cell fate specification of the germline and oogenesis. In particular, it inhibits germ cell proliferation. Regulates the function and localization of the RNA-binding protein fbf-2 in the germline. Plays a role in mitotic and meiotic processes. Involved in the pairing of homologous chromosomes. Independently of its dynein-mediated functions, plays a role in germ cell apoptosis. This chain is Dynein light chain 1, cytoplasmic, found in Caenorhabditis elegans.